The sequence spans 364 residues: Pre-small/secreted glycoprotein (364 aa).

An N-terminal signal peptide occupies residues 1-32 (MGVTGILQLPRDRFKRTSFFLWVIILFQRTFS). The N-linked (GlcNAc...) asparagine; by host glycan is linked to Asn40. Disulfide bonds link Cys108–Cys135 and Cys121–Cys147. Residues Asn204, Asn228, Asn238, Asn257, and Asn268 are each glycosylated (N-linked (GlcNAc...) asparagine; by host).

Belongs to the filoviruses glycoprotein family. Homodimer; disulfide-linked. The homodimers are linked by two disulfide bonds in a parallel orientation. In terms of assembly, monomer. Post-translationally, this precursor is processed into mature sGP and delta-peptide by host furin or furin-like proteases. The cleavage site corresponds to the furin optimal cleavage sequence [KR]-X-[KR]-R. N-glycosylated. In terms of processing, O-glycosylated.

It is found in the secreted. Seems to possess an anti-inflammatory activity as it can reverse the barrier-decreasing effects of TNF alpha. Might therefore contribute to the lack of inflammatory reaction seen during infection in spite the of extensive necrosis and massive virus production. Does not seem to be involved in activation of primary macrophages. Does not seem to interact specifically with neutrophils. Functionally, viroporin that permeabilizes mammalian cell plasma membranes. It acts by altering permeation of ionic compounds and small molecules. This activity may lead to viral enterotoxic activity. This is Pre-small/secreted glycoprotein (GP) from Epomops franqueti (Franquet's epauletted fruit bat).